Reading from the N-terminus, the 248-residue chain is Putative amino-acid ABC transporter-binding protein PatH (248 aa).

A signal peptide spans 1–21 (MKNWIKVAVAAIALSAATVQA).

This sequence belongs to the bacterial solute-binding protein 3 family.

It is found in the periplasm. Probably part of a binding-protein-dependent transport system for an amino acid. In Vibrio harveyi (Beneckea harveyi), this protein is Putative amino-acid ABC transporter-binding protein PatH (patH).